The chain runs to 433 residues: tRNA-2-methylthio-N(6)-dimethylallyladenosine synthase (433 aa).

One can recognise an MTTase N-terminal domain in the interval 4-119; sequence KKLFIQTLGC…ITQAIKTPKF (116 aa). The [4Fe-4S] cluster site is built by cysteine 13, cysteine 50, cysteine 82, cysteine 151, cysteine 155, and cysteine 158. In terms of domain architecture, Radical SAM core spans 137–370; the sequence is RNSIYKSYIN…QNRHSEILDE (234 aa). The TRAM domain maps to 373–433; that stretch reads KKQENKTFKV…KRMVLYGEIV (61 aa).

Belongs to the methylthiotransferase family. MiaB subfamily. As to quaternary structure, monomer. Requires [4Fe-4S] cluster as cofactor.

It is found in the cytoplasm. It catalyses the reaction N(6)-dimethylallyladenosine(37) in tRNA + (sulfur carrier)-SH + AH2 + 2 S-adenosyl-L-methionine = 2-methylsulfanyl-N(6)-dimethylallyladenosine(37) in tRNA + (sulfur carrier)-H + 5'-deoxyadenosine + L-methionine + A + S-adenosyl-L-homocysteine + 2 H(+). Its function is as follows. Catalyzes the methylthiolation of N6-(dimethylallyl)adenosine (i(6)A), leading to the formation of 2-methylthio-N6-(dimethylallyl)adenosine (ms(2)i(6)A) at position 37 in tRNAs that read codons beginning with uridine. The protein is tRNA-2-methylthio-N(6)-dimethylallyladenosine synthase of Campylobacter jejuni (strain RM1221).